We begin with the raw amino-acid sequence, 422 residues long: CinA-like protein (422 aa).

This sequence belongs to the CinA family.

In Mycolicibacterium gilvum (strain PYR-GCK) (Mycobacterium gilvum (strain PYR-GCK)), this protein is CinA-like protein.